Consider the following 452-residue polypeptide: Cell division protein FtsZ (452 aa).

Residues Gly-24–Asn-28, Gly-111–Gly-113, Glu-142, Arg-146, and Asp-190 contribute to the GTP site. Residues Asp-432–Asp-452 form a disordered region. Residues Gln-433 to Asp-442 are compositionally biased toward basic and acidic residues.

Belongs to the FtsZ family. As to quaternary structure, homodimer. Polymerizes to form a dynamic ring structure in a strictly GTP-dependent manner. Interacts directly with several other division proteins.

The protein localises to the cytoplasm. Essential cell division protein that forms a contractile ring structure (Z ring) at the future cell division site. The regulation of the ring assembly controls the timing and the location of cell division. One of the functions of the FtsZ ring is to recruit other cell division proteins to the septum to produce a new cell wall between the dividing cells. Binds GTP and shows GTPase activity. The sequence is that of Cell division protein FtsZ from Rickettsia conorii (strain ATCC VR-613 / Malish 7).